Consider the following 241-residue polypeptide: Probable transcriptional regulatory protein Mpe_A1337 (241 aa).

A disordered region spans residues 1 to 20 (MAGHSKWANIQHRKGRQDEK).

This sequence belongs to the TACO1 family.

The protein resides in the cytoplasm. This is Probable transcriptional regulatory protein Mpe_A1337 from Methylibium petroleiphilum (strain ATCC BAA-1232 / LMG 22953 / PM1).